The following is a 207-amino-acid chain: Keratin-associated protein 27-1 (207 aa).

The interval 184–207 (QLLESSPGVEPTCCVTGGSQLPSK) is disordered.

The protein belongs to the PMG family. As to quaternary structure, interacts with hair keratins.

Its function is as follows. In the hair cortex, hair keratin intermediate filaments are embedded in an interfilamentous matrix, consisting of hair keratin-associated proteins (KRTAP), which are essential for the formation of a rigid and resistant hair shaft through their extensive disulfide bond cross-linking with abundant cysteine residues of hair keratins. The matrix proteins include the high-sulfur and high-glycine-tyrosine keratins. The protein is Keratin-associated protein 27-1 (KRTAP27-1) of Homo sapiens (Human).